The following is a 148-amino-acid chain: Large-conductance mechanosensitive channel (148 aa).

2 helical membrane-spanning segments follow: residues Val16–Ile36 and Gly89–Val109.

Belongs to the MscL family. Homopentamer.

It localises to the cell inner membrane. Channel that opens in response to stretch forces in the membrane lipid bilayer. May participate in the regulation of osmotic pressure changes within the cell. In Paraburkholderia xenovorans (strain LB400), this protein is Large-conductance mechanosensitive channel.